Reading from the N-terminus, the 1090-residue chain is Vinculin (1090 aa).

Repeat copies occupy residues 339–446 (DADN…SQNS) and 455–561 (QNAQ…DLGD). The interval 339–561 (DADNVTVMRK…LKNALRDLGD (223 aa)) is 2 X repeats. Disordered stretches follow at residues 811–842 (GVPM…SQVI) and 864–895 (DIPA…EEET). The segment covering 817 to 830 (GRHSSYQESISRAS) has biased composition (polar residues). Pro residues predominate over residues 866–887 (PAPPRPPPPVELSPPPRPPPPP).

It belongs to the vinculin/alpha-catenin family. As to quaternary structure, may interact with sorb-1. In terms of tissue distribution, expressed in gonadal sheath cells and the spermatheca. Expressed in body wall muscles.

Its subcellular location is the cytoplasm. It localises to the cytoskeleton. It is found in the cell junction. The protein resides in the adherens junction. The protein localises to the cell membrane. Its subcellular location is the focal adhesion. Involved in cell adhesion. May be involved in the attachment of the actin-based microfilaments to the plasma membrane. Involved in ovulation. In Caenorhabditis elegans, this protein is Vinculin.